A 278-amino-acid chain; its full sequence is Polyamine aminopropyltransferase (278 aa).

The PABS domain maps to 5–238; that stretch reads ELWFTEQQTP…GLWSFTLGSK (234 aa). Glutamine 34 lines the S-methyl-5'-thioadenosine pocket. Spermidine contacts are provided by histidine 65 and aspartate 89. S-methyl-5'-thioadenosine is bound by residues glutamate 109 and 140 to 141; that span reads DG. Aspartate 158 (proton acceptor) is an active-site residue. 158-161 is a spermidine binding site; sequence DSTD. Residue proline 165 coordinates S-methyl-5'-thioadenosine.

It belongs to the spermidine/spermine synthase family. In terms of assembly, homodimer or homotetramer.

The protein resides in the cytoplasm. The catalysed reaction is S-adenosyl 3-(methylsulfanyl)propylamine + putrescine = S-methyl-5'-thioadenosine + spermidine + H(+). It functions in the pathway amine and polyamine biosynthesis; spermidine biosynthesis; spermidine from putrescine: step 1/1. Catalyzes the irreversible transfer of a propylamine group from the amino donor S-adenosylmethioninamine (decarboxy-AdoMet) to putrescine (1,4-diaminobutane) to yield spermidine. This chain is Polyamine aminopropyltransferase, found in Caldicellulosiruptor bescii (strain ATCC BAA-1888 / DSM 6725 / KCTC 15123 / Z-1320) (Anaerocellum thermophilum).